The sequence spans 808 residues: Enhancer of polycomb homolog 2 (808 aa).

Residues K135, K195, and K324 each participate in a glycyl lysine isopeptide (Lys-Gly) (interchain with G-Cter in SUMO2) cross-link. Residues 337–357 (YPKKPKAEAGIAPQQPTPETL) are disordered. K362 is covalently cross-linked (Glycyl lysine isopeptide (Lys-Gly) (interchain with G-Cter in SUMO2)). Disordered stretches follow at residues 371 to 397 (QSSD…PDGS), 595 to 630 (QRQQ…CMSK), and 645 to 682 (VSAP…LYST). Positions 595–614 (QRQQLAQLHQKQQSQHSSQQ) are enriched in low complexity. 2 stretches are compositionally biased toward polar residues: residues 615 to 630 (THPK…CMSK) and 658 to 682 (EQNT…LYST). Residue S755 is modified to Phosphoserine.

It belongs to the enhancer of polycomb family.

Its subcellular location is the nucleus. In terms of biological role, may play a role in transcription or DNA repair. This Mus musculus (Mouse) protein is Enhancer of polycomb homolog 2 (Epc2).